Reading from the N-terminus, the 287-residue chain is Formamidopyrimidine-DNA glycosylase (287 aa).

Catalysis depends on proline 2, which acts as the Schiff-base intermediate with DNA. Catalysis depends on glutamate 3, which acts as the Proton donor. The Proton donor; for beta-elimination activity role is filled by lysine 58. DNA contacts are provided by histidine 104, arginine 123, and arginine 166. The FPG-type zinc finger occupies 251-287 (RTYDREGQPCRNDGCRGVIGREVQAGRSTFYCPVCQR). Arginine 277 acts as the Proton donor; for delta-elimination activity in catalysis.

It belongs to the FPG family. As to quaternary structure, monomer. Requires Zn(2+) as cofactor.

The catalysed reaction is Hydrolysis of DNA containing ring-opened 7-methylguanine residues, releasing 2,6-diamino-4-hydroxy-5-(N-methyl)formamidopyrimidine.. It carries out the reaction 2'-deoxyribonucleotide-(2'-deoxyribose 5'-phosphate)-2'-deoxyribonucleotide-DNA = a 3'-end 2'-deoxyribonucleotide-(2,3-dehydro-2,3-deoxyribose 5'-phosphate)-DNA + a 5'-end 5'-phospho-2'-deoxyribonucleoside-DNA + H(+). Its function is as follows. Involved in base excision repair of DNA damaged by oxidation or by mutagenic agents. Acts as a DNA glycosylase that recognizes and removes damaged bases. Has a preference for oxidized purines, such as 7,8-dihydro-8-oxoguanine (8-oxoG). Has AP (apurinic/apyrimidinic) lyase activity and introduces nicks in the DNA strand. Cleaves the DNA backbone by beta-delta elimination to generate a single-strand break at the site of the removed base with both 3'- and 5'-phosphates. The polypeptide is Formamidopyrimidine-DNA glycosylase (Phenylobacterium zucineum (strain HLK1)).